The chain runs to 123 residues: UPF0102 protein CLK_1817 (123 aa).

This sequence belongs to the UPF0102 family.

The protein is UPF0102 protein CLK_1817 of Clostridium botulinum (strain Loch Maree / Type A3).